The sequence spans 113 residues: Meiotically up-regulated gene 98 protein, mitochondrial (113 aa).

Its subcellular location is the mitochondrion. In terms of biological role, has a role in meiosis. This Schizosaccharomyces pombe (strain 972 / ATCC 24843) (Fission yeast) protein is Meiotically up-regulated gene 98 protein, mitochondrial (mug98).